The chain runs to 195 residues: MDKNKEMTPTTPSLARLETFFKEKVTPNLVERFQYKNAMLVPKLKKISINIGVGAAAAEPKLLEIALQELAQITGQKPQIRKSKKAISNFKLREGQAIGCRVTLRRKAMYEFFDRFVSLAVPRIRDFRGLSDTSFDGRGNYTVGVREQIIFPEIDIDKVPRISGMDISFVTSASTDEEAYVLLSELGMPFKKKNN.

The protein belongs to the universal ribosomal protein uL5 family. Part of the 50S ribosomal subunit; part of the 5S rRNA/L5/L18/L25 subcomplex. Contacts the 5S rRNA and the P site tRNA. Forms a bridge to the 30S subunit in the 70S ribosome.

This is one of the proteins that bind and probably mediate the attachment of the 5S RNA into the large ribosomal subunit, where it forms part of the central protuberance. In the 70S ribosome it contacts protein S13 of the 30S subunit (bridge B1b), connecting the 2 subunits; this bridge is implicated in subunit movement. Contacts the P site tRNA; the 5S rRNA and some of its associated proteins might help stabilize positioning of ribosome-bound tRNAs. In Pelodictyon phaeoclathratiforme (strain DSM 5477 / BU-1), this protein is Large ribosomal subunit protein uL5.